Here is a 56-residue protein sequence, read N- to C-terminus: Ovomucoid (56 aa).

Positions 6 to 56 constitute a Kazal-like domain; the sequence is VDCSEYPKPDCTLEYRPLCGSDNKTYANKCNFCNAVVESNGTLTLSHFGKC. 3 disulfide bridges follow: cysteine 8–cysteine 38, cysteine 16–cysteine 35, and cysteine 24–cysteine 56. Asparagine 45 carries N-linked (GlcNAc...) asparagine glycosylation.

The protein localises to the secreted. This Callipepla squamata castanogastris (Chestnut bellied scaled quail) protein is Ovomucoid.